The primary structure comprises 882 residues: Alanine--tRNA ligase (882 aa).

Residues His-570, His-574, Cys-672, and His-676 each contribute to the Zn(2+) site.

The protein belongs to the class-II aminoacyl-tRNA synthetase family. It depends on Zn(2+) as a cofactor.

The protein localises to the cytoplasm. The catalysed reaction is tRNA(Ala) + L-alanine + ATP = L-alanyl-tRNA(Ala) + AMP + diphosphate. Catalyzes the attachment of alanine to tRNA(Ala) in a two-step reaction: alanine is first activated by ATP to form Ala-AMP and then transferred to the acceptor end of tRNA(Ala). Also edits incorrectly charged Ser-tRNA(Ala) and Gly-tRNA(Ala) via its editing domain. In Xanthomonas campestris pv. campestris (strain ATCC 33913 / DSM 3586 / NCPPB 528 / LMG 568 / P 25), this protein is Alanine--tRNA ligase.